We begin with the raw amino-acid sequence, 285 residues long: Golgi phosphoprotein 3-like (285 aa).

The tract at residues 1-43 (MTTLTHRTRRTEVSKSCEKKIESEEDTNQERSPDNEDPGDSKD) is disordered. Residues 10 to 43 (RTEVSKSCEKKIESEEDTNQERSPDNEDPGDSKD) are compositionally biased toward basic and acidic residues. A 1,2-diacyl-sn-glycero-3-phospho-(1D-myo-inositol 4-phosphate)-binding residues include W67 and R76. Phosphoserine is present on S112. 2 residues coordinate a 1,2-diacyl-sn-glycero-3-phospho-(1D-myo-inositol 4-phosphate): R157 and R160. Residues 176 to 187 (EKQNFLLFDMTT) form a beta-hairpin required for oligomerization region.

Belongs to the GOLPH3/VPS74 family. As to quaternary structure, homooligomer. Does not interact MYO18; differs from GOLPH3 by its inability to interact with MYO18. May interact with ARF1.

It is found in the golgi apparatus. It localises to the golgi stack membrane. The protein resides in the trans-Golgi network membrane. In terms of biological role, phosphatidylinositol-4-phosphate-binding protein that may antagonize the action of GOLPH3 which is required for the process of vesicle budding at the Golgi and anterograde transport to the plasma membrane. This chain is Golgi phosphoprotein 3-like (Golph3l), found in Rattus norvegicus (Rat).